The sequence spans 151 residues: Small ribosomal subunit protein uS15 (151 aa).

This sequence belongs to the universal ribosomal protein uS15 family.

The sequence is that of Small ribosomal subunit protein uS15 (RPS13) from Ciona intestinalis (Transparent sea squirt).